The following is a 421-amino-acid chain: Glutamate-1-semialdehyde 2,1-aminomutase (421 aa).

Lys261 is subject to N6-(pyridoxal phosphate)lysine.

This sequence belongs to the class-III pyridoxal-phosphate-dependent aminotransferase family. HemL subfamily. Requires pyridoxal 5'-phosphate as cofactor.

It localises to the cytoplasm. The catalysed reaction is (S)-4-amino-5-oxopentanoate = 5-aminolevulinate. It participates in porphyrin-containing compound metabolism; protoporphyrin-IX biosynthesis; 5-aminolevulinate from L-glutamyl-tRNA(Glu): step 2/2. In Thermoplasma acidophilum (strain ATCC 25905 / DSM 1728 / JCM 9062 / NBRC 15155 / AMRC-C165), this protein is Glutamate-1-semialdehyde 2,1-aminomutase (hemL).